Reading from the N-terminus, the 545-residue chain is Chaperonin GroEL 2 (545 aa).

ATP is bound by residues 29-32, 86-90, Gly413, 477-479, and Asp493; these read TLGP, DGTTT, and DAA. Residues 526 to 545 form a disordered region; it reads PEPAAAGHGHGHGHQHGPGF. The segment covering 534–545 has biased composition (basic residues); sequence GHGHGHQHGPGF.

The protein belongs to the chaperonin (HSP60) family. As to quaternary structure, forms a cylinder of 14 subunits composed of two heptameric rings stacked back-to-back. Interacts with the co-chaperonin GroES.

The protein localises to the cytoplasm. The enzyme catalyses ATP + H2O + a folded polypeptide = ADP + phosphate + an unfolded polypeptide.. Together with its co-chaperonin GroES, plays an essential role in assisting protein folding. The GroEL-GroES system forms a nano-cage that allows encapsulation of the non-native substrate proteins and provides a physical environment optimized to promote and accelerate protein folding. The protein is Chaperonin GroEL 2 of Salinispora arenicola (strain CNS-205).